The primary structure comprises 464 residues: IAA-amino acid hydrolase ILR1-like 6 (464 aa).

Residues 1–24 form the signal peptide; sequence MDNLRKLNLLSVSLTIIFVSLTIA. Positions 175, 177, 211, 235, and 433 each coordinate Mn(2+).

This sequence belongs to the peptidase M20 family.

The enzyme catalyses a jasmonyl-L-amino acid + H2O = a jasmonate + an L-alpha-amino acid. In terms of biological role, hydrolyzes certain amino acid conjugates of the plant growth regulator indole-3-acetic acid (IAA). Also hydrolyzes amino acid conjugates of jasmonic acid and 12-hydroxy jasmonic acid. In Arabidopsis thaliana (Mouse-ear cress), this protein is IAA-amino acid hydrolase ILR1-like 6.